Reading from the N-terminus, the 193-residue chain is Imidazoleglycerol-phosphate dehydratase (193 aa).

Belongs to the imidazoleglycerol-phosphate dehydratase family.

It is found in the cytoplasm. It catalyses the reaction D-erythro-1-(imidazol-4-yl)glycerol 3-phosphate = 3-(imidazol-4-yl)-2-oxopropyl phosphate + H2O. It participates in amino-acid biosynthesis; L-histidine biosynthesis; L-histidine from 5-phospho-alpha-D-ribose 1-diphosphate: step 6/9. The protein is Imidazoleglycerol-phosphate dehydratase of Saccharolobus islandicus (strain M.14.25 / Kamchatka #1) (Sulfolobus islandicus).